The primary structure comprises 1199 residues: DNA-directed RNA polymerase subunit beta' (1199 aa).

Zn(2+) contacts are provided by Cys60, Cys62, Cys75, and Cys78. Residues Asp449, Asp451, and Asp453 each coordinate Mg(2+). Positions 818, 892, 899, and 902 each coordinate Zn(2+).

This sequence belongs to the RNA polymerase beta' chain family. In terms of assembly, the RNAP catalytic core consists of 2 alpha, 1 beta, 1 beta' and 1 omega subunit. When a sigma factor is associated with the core the holoenzyme is formed, which can initiate transcription. Mg(2+) is required as a cofactor. The cofactor is Zn(2+).

The enzyme catalyses RNA(n) + a ribonucleoside 5'-triphosphate = RNA(n+1) + diphosphate. Functionally, DNA-dependent RNA polymerase catalyzes the transcription of DNA into RNA using the four ribonucleoside triphosphates as substrates. This Bacillus pumilus (strain SAFR-032) protein is DNA-directed RNA polymerase subunit beta'.